The primary structure comprises 719 residues: Phosphoribosylformylglycinamidine synthase subunit PurL (719 aa).

His47 is a catalytic residue. ATP-binding residues include Tyr50 and Lys89. Residue Glu91 coordinates Mg(2+). Substrate contacts are provided by residues 92 to 95 (SHNH) and Arg114. His93 (proton acceptor) is an active-site residue. Position 115 (Asp115) interacts with Mg(2+). Residue Gln238 coordinates substrate. Asp266 lines the Mg(2+) pocket. 310–312 (ESQ) is a binding site for substrate. ATP contacts are provided by Asp488 and Gly525. Position 526 (Asn526) interacts with Mg(2+). Ser528 is a substrate binding site.

It belongs to the FGAMS family. Monomer. Part of the FGAM synthase complex composed of 1 PurL, 1 PurQ and 2 PurS subunits.

It is found in the cytoplasm. It carries out the reaction N(2)-formyl-N(1)-(5-phospho-beta-D-ribosyl)glycinamide + L-glutamine + ATP + H2O = 2-formamido-N(1)-(5-O-phospho-beta-D-ribosyl)acetamidine + L-glutamate + ADP + phosphate + H(+). It participates in purine metabolism; IMP biosynthesis via de novo pathway; 5-amino-1-(5-phospho-D-ribosyl)imidazole from N(2)-formyl-N(1)-(5-phospho-D-ribosyl)glycinamide: step 1/2. Part of the phosphoribosylformylglycinamidine synthase complex involved in the purines biosynthetic pathway. Catalyzes the ATP-dependent conversion of formylglycinamide ribonucleotide (FGAR) and glutamine to yield formylglycinamidine ribonucleotide (FGAM) and glutamate. The FGAM synthase complex is composed of three subunits. PurQ produces an ammonia molecule by converting glutamine to glutamate. PurL transfers the ammonia molecule to FGAR to form FGAM in an ATP-dependent manner. PurS interacts with PurQ and PurL and is thought to assist in the transfer of the ammonia molecule from PurQ to PurL. The polypeptide is Phosphoribosylformylglycinamidine synthase subunit PurL (Cereibacter sphaeroides (strain ATCC 17025 / ATH 2.4.3) (Rhodobacter sphaeroides)).